The sequence spans 408 residues: Inhibin beta B chain (408 aa).

A signal peptide spans 1–28 (MDGLPGRALGAACLLMLAVGSLGPGVWG). Positions 29 to 60 (SPTPPPLPAAPQPPPPPPGAPGGSQDTCTSCG) are disordered. Positions 29–293 (SPTPPPLPAA…GDSRHRIRKR (265 aa)) are excised as a propeptide. Residues 30–48 (PTPPPLPAAPQPPPPPPGA) show a composition bias toward pro residues. A glycan (N-linked (GlcNAc...) asparagine) is linked at Asn94. 4 disulfides stabilise this stretch: Cys297-Cys305, Cys304-Cys373, Cys333-Cys405, and Cys337-Cys407.

The protein belongs to the TGF-beta family. As to quaternary structure, dimeric, linked by one or more disulfide bonds. Inhibin B is a dimer of alpha and beta-B. Activin B is a homodimer of beta-B. Activin AB is a dimer of beta-A and beta-B. Interacts with FST and FSTL3.

The protein resides in the secreted. Inhibins and activins inhibit and activate, respectively, the secretion of follitropin by the pituitary gland. Inhibins/activins are involved in regulating a number of diverse functions such as hypothalamic and pituitary hormone secretion, gonadal hormone secretion, germ cell development and maturation, erythroid differentiation, insulin secretion, nerve cell survival, embryonic axial development or bone growth, depending on their subunit composition. Inhibins appear to oppose the functions of activins. In terms of biological role, activin B is a dimer of alpha and beta-B that plays a role in several essential biological processes including embryonic development, stem cell maintenance and differentiation, haematopoiesis, cell proliferation and wound healing. Signals through type I receptor ACVR1C, abundantly expressed in pancreatic beta cells, and type II receptors like ACVR2A. Upon ligand binding, these receptors phosphorylate intracellular signaling mediators SMAD2 and SMAD3, which form a complex with SMAD4, translocate to the nucleus, and regulate gene expression. Plays a crucial role in the induction of hepcidin by inflammation through activation of ACVR1C and subsequent phosphorylation of SMAD1/5/8. Regulates adipocyte lipid metabolism by decreasing non-esterified fatty acids and glycerol release and increases intracellular triglyceride content. Stimulates wound healing by promoting cell migration and hair follicle regeneration through the JNK and ERK signaling pathways downstream of RHOA. Functionally, inhibin B is a dimer of alpha and beta-B that plays a crucial role in the regulation of the reproductive system by inhibiting the secretion of follicle-stimulating hormone (FSH) from the anterior pituitary gland. Thereby, maintains reproductive homeostasis in both males and females. Acts as a more potent suppressor of FSH release than inhibin A. Functions as competitive receptor antagonist binding activin type II receptors with high affinity in the presence of the TGF-beta type III coreceptor/TGFBR3L. The sequence is that of Inhibin beta B chain (INHBB) from Bos taurus (Bovine).